The following is a 308-amino-acid chain: Malonate utilization transcriptional regulator (308 aa).

One can recognise an HTH lysR-type domain in the interval 9–66 (ITFRKLSVFMMFMAKGNIARTAEAMKLSSVSVHRALHTLEEGVGCPLFVHKGRNLLPL). A DNA-binding region (H-T-H motif) is located at residues 26–45 (IARTAEAMKLSSVSVHRALH).

The protein belongs to the LysR transcriptional regulatory family.

Its function is as follows. Transcriptional regulator of the mau genes for malonate utilization. This is Malonate utilization transcriptional regulator (mauR) from Klebsiella pneumoniae.